A 136-amino-acid chain; its full sequence is Large-conductance mechanosensitive channel (136 aa).

2 helical membrane-spanning segments follow: residues 9-29 and 79-99; these read AFASRGNVIDMAVGIIIGAAF and IQTVIDFTIIAFAIFMGLKAI.

The protein belongs to the MscL family. Homopentamer.

Its subcellular location is the cell inner membrane. Channel that opens in response to stretch forces in the membrane lipid bilayer. May participate in the regulation of osmotic pressure changes within the cell. The chain is Large-conductance mechanosensitive channel from Shewanella sp. (strain MR-4).